Reading from the N-terminus, the 359-residue chain is uncharacterized protein (359 aa).

Disordered stretches follow at residues 90–117 (QESPVRGMSPAPNGAKVPPRPHSEPSRK), 132–161 (IKKEEIKAKRPPSPPKACSTPGSCSSGMTS), and 235–359 (TSME…THRR). Residues 151 to 161 (TPGSCSSGMTS) are compositionally biased toward polar residues. Low complexity predominate over residues 245-259 (KPPTVKSPPTVKLPP). Residues 286-299 (EENKEVPKEAEHKP) are compositionally biased toward basic and acidic residues.

This is an uncharacterized protein from Homo sapiens (Human).